Reading from the N-terminus, the 269-residue chain is Diadenylate cyclase (269 aa).

Residues 109–266 enclose the DAC domain; that stretch reads RSGIYDLFAN…GGKMILEIDP (158 aa).

It belongs to the adenylate cyclase family. DacZ subfamily. Mn(2+) serves as cofactor.

The enzyme catalyses 2 ATP = 3',3'-c-di-AMP + 2 diphosphate. Diadenylate cyclase that catalyzes the condensation of 2 ATP molecules into cyclic di-AMP (c-di-AMP). c-di-AMP is a second messenger for intracellular signal transduction involved in the control of important regulatory processes such as osmoregulation. Is essential for H.volcanii. Overexpression of DacZ leads to cell death, suggesting the need for tight regulation of c-di-AMP levels. Cannot use GTP as substrate. The polypeptide is Diadenylate cyclase (Haloferax volcanii (strain ATCC 29605 / DSM 3757 / JCM 8879 / NBRC 14742 / NCIMB 2012 / VKM B-1768 / DS2) (Halobacterium volcanii)).